Consider the following 906-residue polypeptide: Pre-mRNA-splicing factor prp1 (906 aa).

Disordered regions lie at residues 50-129 (IEQR…VSSQ) and 142-164 (DEDWNNIPEPGDLTRKKRTKQPR). Over residues 108-124 (REKQEQLQKEKYEKENP) the composition is skewed to basic and acidic residues. Position 235 is a phosphoserine (S235). HAT repeat units lie at residues 258 to 290 (GDIRKARKLLQSVIETNPKHASGWVAAARLEEV), 322 to 353 (HPAAEAKVIIANAVKKLPKSVTLWLEAEKLEN), 354 to 384 (QAQHKKRIIKKALEFNPTSVSLWKEAVNLEE), 385 to 416 (EVDNARILLARAVELIPMSIDLWLALARLETY), 524 to 556 (KCIDCARAVFAFSLRVYPKSEKLWLRAVELEKL), 558 to 590 (GTTESVCSILEKAVESCPKAEILWLLYAKERKN), 592 to 624 (NDIAGARNILGRAFEYNSNSEEIWLAAVRIEFV), 693 to 725 (EQIELARDAYLAGTKVCPYSIPLWLLLAKLEEK), 726 to 758 (QSVIRARVVFDRAKVKNPKNEFLWLELIKMELR), 760 to 792 (GNISQVRAALAKALQECPSSGLLWTEAIWLEPR), and 824 to 856 (KKADKARSWFLKAVKADQDNGDVWCWFYKYSLE).

Interacts with brr2 and spp42.

The protein localises to the nucleus. Functionally, involved in pre-mRNA splicing. Interacts with prp6 and prp13. May also be involved in the regulation of the G0-G1/G2 transition. Required for pre-spliceosome formation, which is the first step of pre-mRNA splicing. This protein is associated with snRNP U5. Has a role in branch site-3' splice site selection. Associates with the branch site-3' splice 3'-exon region. In Schizosaccharomyces pombe (strain 972 / ATCC 24843) (Fission yeast), this protein is Pre-mRNA-splicing factor prp1 (prp1).